A 428-amino-acid chain; its full sequence is Glutamate-1-semialdehyde 2,1-aminomutase (428 aa).

N6-(pyridoxal phosphate)lysine is present on Lys267.

Belongs to the class-III pyridoxal-phosphate-dependent aminotransferase family. HemL subfamily. As to quaternary structure, homodimer. The cofactor is pyridoxal 5'-phosphate.

The protein localises to the cytoplasm. It catalyses the reaction (S)-4-amino-5-oxopentanoate = 5-aminolevulinate. Its pathway is porphyrin-containing compound metabolism; protoporphyrin-IX biosynthesis; 5-aminolevulinate from L-glutamyl-tRNA(Glu): step 2/2. The protein operates within porphyrin-containing compound metabolism; chlorophyll biosynthesis. This chain is Glutamate-1-semialdehyde 2,1-aminomutase, found in Prochlorococcus marinus (strain MIT 9313).